Reading from the N-terminus, the 503-residue chain is Probable cytosol aminopeptidase (503 aa).

Residues lysine 270 and aspartate 275 each contribute to the Mn(2+) site. Lysine 282 is a catalytic residue. Residues aspartate 293, aspartate 352, and glutamate 354 each coordinate Mn(2+). Arginine 356 is an active-site residue.

The protein belongs to the peptidase M17 family. Mn(2+) is required as a cofactor.

The protein localises to the cytoplasm. The enzyme catalyses Release of an N-terminal amino acid, Xaa-|-Yaa-, in which Xaa is preferably Leu, but may be other amino acids including Pro although not Arg or Lys, and Yaa may be Pro. Amino acid amides and methyl esters are also readily hydrolyzed, but rates on arylamides are exceedingly low.. The catalysed reaction is Release of an N-terminal amino acid, preferentially leucine, but not glutamic or aspartic acids.. Functionally, presumably involved in the processing and regular turnover of intracellular proteins. Catalyzes the removal of unsubstituted N-terminal amino acids from various peptides. The protein is Probable cytosol aminopeptidase of Erwinia tasmaniensis (strain DSM 17950 / CFBP 7177 / CIP 109463 / NCPPB 4357 / Et1/99).